Reading from the N-terminus, the 333-residue chain is Protein pelota homolog (333 aa).

It belongs to the eukaryotic release factor 1 family. Pelota subfamily. As to quaternary structure, monomer. It depends on a divalent metal cation as a cofactor.

The protein localises to the cytoplasm. In terms of biological role, may function in recognizing stalled ribosomes, interact with stem-loop structures in stalled mRNA molecules, and effect endonucleolytic cleavage of the mRNA. May play a role in the release non-functional ribosomes and degradation of damaged mRNAs. Has endoribonuclease activity. The chain is Protein pelota homolog from Pyrobaculum arsenaticum (strain DSM 13514 / JCM 11321 / PZ6).